The chain runs to 230 residues: Ribonuclease 3 (230 aa).

One can recognise an RNase III domain in the interval 10–133 (DPRLLSRIGY…IIGAIYLDSS (124 aa)). Glutamate 46 serves as a coordination point for Mg(2+). The active site involves aspartate 50. Aspartate 119 and glutamate 122 together coordinate Mg(2+). The active site involves glutamate 122. A DRBM domain is found at 161-230 (DPKSRLQEYL…AAEILKLLEQ (70 aa)).

The protein belongs to the ribonuclease III family. As to quaternary structure, homodimer. Mg(2+) is required as a cofactor.

It localises to the cytoplasm. The enzyme catalyses Endonucleolytic cleavage to 5'-phosphomonoester.. Its function is as follows. Digests double-stranded RNA. Involved in the processing of primary rRNA transcript to yield the immediate precursors to the large and small rRNAs (23S and 16S). Processes some mRNAs, and tRNAs when they are encoded in the rRNA operon. Processes pre-crRNA and tracrRNA of type II CRISPR loci if present in the organism. The protein is Ribonuclease 3 (rnc) of Acinetobacter baumannii (strain AB307-0294).